Reading from the N-terminus, the 571-residue chain is Glutamine--tRNA ligase (571 aa).

The 'HIGH' region motif lies at 35-45 (PEPNGYLHIGH). ATP contacts are provided by residues 36–38 (EPN) and 42–48 (HIGHAKS). Residues Asp68 and Tyr213 each coordinate L-glutamine. Residues Thr232, 262 to 263 (RL), and 270 to 272 (LSK) contribute to the ATP site. The 'KMSKS' region signature appears at 269-273 (ILSKR).

The protein belongs to the class-I aminoacyl-tRNA synthetase family. As to quaternary structure, monomer.

The protein localises to the cytoplasm. The catalysed reaction is tRNA(Gln) + L-glutamine + ATP = L-glutaminyl-tRNA(Gln) + AMP + diphosphate. The chain is Glutamine--tRNA ligase from Buchnera aphidicola subsp. Acyrthosiphon pisum (strain 5A).